Consider the following 78-residue polypeptide: Translation initiation factor IF-1, chloroplastic (78 aa).

One can recognise an S1-like domain in the interval 1–72 (MEKQKLIDME…TKGRITYRLR (72 aa)).

It belongs to the IF-1 family. As to quaternary structure, component of the 30S ribosomal translation pre-initiation complex which assembles on the 30S ribosome in the order IF-2 and IF-3, IF-1 and N-formylmethionyl-tRNA(fMet); mRNA recruitment can occur at any time during PIC assembly.

Its subcellular location is the plastid. The protein resides in the chloroplast. In terms of biological role, one of the essential components for the initiation of protein synthesis. Stabilizes the binding of IF-2 and IF-3 on the 30S subunit to which N-formylmethionyl-tRNA(fMet) subsequently binds. Helps modulate mRNA selection, yielding the 30S pre-initiation complex (PIC). Upon addition of the 50S ribosomal subunit IF-1, IF-2 and IF-3 are released leaving the mature 70S translation initiation complex. The protein is Translation initiation factor IF-1, chloroplastic of Marchantia polymorpha (Common liverwort).